The following is a 393-amino-acid chain: MSLPLTRKDLMIVNMGPQHPSMHGVLRLIVTLDGEDVIDCEPILGYLHRGMEKIAENRTIIQYLPYVTRWDYLATMFTEAITVNAPEFLENIQIPQRASYIRVIMLELSRIASHLLWLGPFMADLGAQTPFFYIFRERELIYDLFEAATGMRMMHNYFRIGGVAADLPYGWIDKCLDFCDYFLRGVVEYQQLITQNPIFLERVEGVGFISGEEAVNWGLSGPMLRASGIQWDLRKVDPYECYNQFDWKVQWQKEGDSLARYLVRVSEMRESIKIIQQAVEKIPGGPYENLEVRRFKKAKNSEWNDFEYRFLGKKPSPNFELSKQELYVRVEAPKGELGIYLVGDDSLFPWRWKIRPPGFINLQILPQLVKKMKLADIMTILGSIDIIMGEVDR.

Belongs to the complex I 49 kDa subunit family. As to quaternary structure, NDH is composed of at least 16 different subunits, 5 of which are encoded in the nucleus.

Its subcellular location is the plastid. It localises to the chloroplast thylakoid membrane. It carries out the reaction a plastoquinone + NADH + (n+1) H(+)(in) = a plastoquinol + NAD(+) + n H(+)(out). The enzyme catalyses a plastoquinone + NADPH + (n+1) H(+)(in) = a plastoquinol + NADP(+) + n H(+)(out). NDH shuttles electrons from NAD(P)H:plastoquinone, via FMN and iron-sulfur (Fe-S) centers, to quinones in the photosynthetic chain and possibly in a chloroplast respiratory chain. The immediate electron acceptor for the enzyme in this species is believed to be plastoquinone. Couples the redox reaction to proton translocation, and thus conserves the redox energy in a proton gradient. The chain is NAD(P)H-quinone oxidoreductase subunit H, chloroplastic from Agrostis stolonifera (Creeping bentgrass).